We begin with the raw amino-acid sequence, 142 residues long: Hemoglobin subunit alpha-1 (142 aa).

The region spanning 2–142 is the Globin domain; it reads VLSAADKSNV…VSTVLTSKYR (141 aa). An O2-binding site is contributed by H59. A heme b-binding site is contributed by H88.

This sequence belongs to the globin family. In terms of assembly, heterotetramer of two alpha chains and two beta chains.

Its function is as follows. Involved in oxygen transport from the lung to the various peripheral tissues. Functionally, hemopressin acts as an antagonist peptide of the cannabinoid receptor CNR1. Hemopressin-binding efficiently blocks cannabinoid receptor CNR1 and subsequent signaling. In Capra hircus (Goat), this protein is Hemoglobin subunit alpha-1 (HBA1).